The following is a 403-amino-acid chain: 8-amino-7-oxononanoate synthase (403 aa).

Position 25 (Arg-25) interacts with substrate. 112 to 113 (GY) lines the pyridoxal 5'-phosphate pocket. His-137 contributes to the substrate binding site. Residues Ser-182, His-210, and Thr-239 each coordinate pyridoxal 5'-phosphate. At Lys-242 the chain carries N6-(pyridoxal phosphate)lysine. Position 358 (Thr-358) interacts with substrate.

It belongs to the class-II pyridoxal-phosphate-dependent aminotransferase family. BioF subfamily. Homodimer. Pyridoxal 5'-phosphate serves as cofactor.

The catalysed reaction is 6-carboxyhexanoyl-[ACP] + L-alanine + H(+) = (8S)-8-amino-7-oxononanoate + holo-[ACP] + CO2. The protein operates within cofactor biosynthesis; biotin biosynthesis. Catalyzes the decarboxylative condensation of pimeloyl-[acyl-carrier protein] and L-alanine to produce 8-amino-7-oxononanoate (AON), [acyl-carrier protein], and carbon dioxide. This is 8-amino-7-oxononanoate synthase from Marinomonas sp. (strain MWYL1).